A 74-amino-acid polypeptide reads, in one-letter code: Ubiquitin-like protein FUBI (74 aa).

Belongs to the ubiquitin family.

This is Ubiquitin-like protein FUBI (FAU) from Pongo abelii (Sumatran orangutan).